We begin with the raw amino-acid sequence, 35 residues long: Photosystem II reaction center protein T (35 aa).

A helical membrane pass occupies residues 3–23 (ALVYTFLLVSTLGIIFFAIFF).

Belongs to the PsbT family. PSII is composed of 1 copy each of membrane proteins PsbA, PsbB, PsbC, PsbD, PsbE, PsbF, PsbH, PsbI, PsbJ, PsbK, PsbL, PsbM, PsbT, PsbY, PsbZ, Psb30/Ycf12, at least 3 peripheral proteins of the oxygen-evolving complex and a large number of cofactors. It forms dimeric complexes.

The protein resides in the plastid. It is found in the chloroplast thylakoid membrane. Found at the monomer-monomer interface of the photosystem II (PS II) dimer, plays a role in assembly and dimerization of PSII. PSII is a light-driven water plastoquinone oxidoreductase, using light energy to abstract electrons from H(2)O, generating a proton gradient subsequently used for ATP formation. The sequence is that of Photosystem II reaction center protein T from Schisandra chinensis (Chinese magnolia vine).